Reading from the N-terminus, the 88-residue chain is Cell division topological specificity factor (88 aa).

It belongs to the MinE family.

Its function is as follows. Prevents the cell division inhibition by proteins MinC and MinD at internal division sites while permitting inhibition at polar sites. This ensures cell division at the proper site by restricting the formation of a division septum at the midpoint of the long axis of the cell. The sequence is that of Cell division topological specificity factor from Salmonella agona (strain SL483).